We begin with the raw amino-acid sequence, 129 residues long: Large ribosomal subunit protein bL17 (129 aa).

The protein belongs to the bacterial ribosomal protein bL17 family. As to quaternary structure, part of the 50S ribosomal subunit. Contacts protein L32.

This chain is Large ribosomal subunit protein bL17, found in Yersinia pseudotuberculosis serotype O:1b (strain IP 31758).